Consider the following 235-residue polypeptide: Small ribosomal subunit protein uS2 (235 aa).

Belongs to the universal ribosomal protein uS2 family.

The chain is Small ribosomal subunit protein uS2 from Caldanaerobacter subterraneus subsp. tengcongensis (strain DSM 15242 / JCM 11007 / NBRC 100824 / MB4) (Thermoanaerobacter tengcongensis).